The chain runs to 487 residues: Glutamyl-tRNA(Gln) amidotransferase subunit A (487 aa).

Active-site charge relay system residues include Lys80 and Ser155. Residue Ser179 is the Acyl-ester intermediate of the active site.

The protein belongs to the amidase family. GatA subfamily. Heterotrimer of A, B and C subunits.

It carries out the reaction L-glutamyl-tRNA(Gln) + L-glutamine + ATP + H2O = L-glutaminyl-tRNA(Gln) + L-glutamate + ADP + phosphate + H(+). Its function is as follows. Allows the formation of correctly charged Gln-tRNA(Gln) through the transamidation of misacylated Glu-tRNA(Gln) in organisms which lack glutaminyl-tRNA synthetase. The reaction takes place in the presence of glutamine and ATP through an activated gamma-phospho-Glu-tRNA(Gln). The sequence is that of Glutamyl-tRNA(Gln) amidotransferase subunit A from Chloroflexus aurantiacus (strain ATCC 29366 / DSM 635 / J-10-fl).